Reading from the N-terminus, the 485-residue chain is UDP-N-acetylmuramoyl-L-alanyl-D-glutamate--2,6-diaminopimelate ligase (485 aa).

Position 30 (Ser30) interacts with UDP-N-acetyl-alpha-D-muramoyl-L-alanyl-D-glutamate. Gly113–Thr119 serves as a coordination point for ATP. Residues Thr155–Thr156, Ser182, and Arg190 contribute to the UDP-N-acetyl-alpha-D-muramoyl-L-alanyl-D-glutamate site. An N6-carboxylysine modification is found at Lys222. Residues Arg381, Asp405–Arg408, Gly455, and Glu459 each bind meso-2,6-diaminopimelate. The Meso-diaminopimelate recognition motif motif lies at Asp405–Arg408.

This sequence belongs to the MurCDEF family. MurE subfamily. Mg(2+) serves as cofactor. Post-translationally, carboxylation is probably crucial for Mg(2+) binding and, consequently, for the gamma-phosphate positioning of ATP.

Its subcellular location is the cytoplasm. It carries out the reaction UDP-N-acetyl-alpha-D-muramoyl-L-alanyl-D-glutamate + meso-2,6-diaminopimelate + ATP = UDP-N-acetyl-alpha-D-muramoyl-L-alanyl-gamma-D-glutamyl-meso-2,6-diaminopimelate + ADP + phosphate + H(+). It participates in cell wall biogenesis; peptidoglycan biosynthesis. Functionally, catalyzes the addition of meso-diaminopimelic acid to the nucleotide precursor UDP-N-acetylmuramoyl-L-alanyl-D-glutamate (UMAG) in the biosynthesis of bacterial cell-wall peptidoglycan. The sequence is that of UDP-N-acetylmuramoyl-L-alanyl-D-glutamate--2,6-diaminopimelate ligase from Clostridium tetani (strain Massachusetts / E88).